Consider the following 521-residue polypeptide: Solute carrier family 35 member F4 (521 aa).

The next 10 membrane-spanning stretches (helical) occupy residues 160-180, 192-212, 248-266, 277-297, 301-321, 330-350, 365-385, 395-417, 419-441, and 450-470; these read MVLKGIWGLLIILSVSSSWVG, FYCPFFMTWFSTNWNIMFFPV, FLKRTAPFSILWTLTNYLY, DVSALFCCNKAFVFLLSWIVL, FMGVRIVAAIMAITGIVMMAY, IIGVAFAVGSASTSALYKVLF, FVSTLGFFNLIFISFTPVILY, FAALPWGCLCGMAGLWLAFNILV, VGVVLTYPILISIGTVLSVPGNA, and VIFNVVRLAATIIICIGFLLM. The EamA domain maps to 261–321; that stretch reads LTNYLYLLAL…AITGIVMMAY (61 aa).

This sequence belongs to the SLC35F solute transporter family.

Its subcellular location is the membrane. Its function is as follows. Putative solute transporter. The protein is Solute carrier family 35 member F4 (SLC35F4) of Homo sapiens (Human).